Reading from the N-terminus, the 160-residue chain is Probable chemoreceptor glutamine deamidase CheD (160 aa).

Belongs to the CheD family.

The catalysed reaction is L-glutaminyl-[protein] + H2O = L-glutamyl-[protein] + NH4(+). Functionally, probably deamidates glutamine residues to glutamate on methyl-accepting chemotaxis receptors (MCPs), playing an important role in chemotaxis. This is Probable chemoreceptor glutamine deamidase CheD from Desulfitobacterium hafniense (strain DSM 10664 / DCB-2).